The sequence spans 433 residues: Monodehydroascorbate reductase (433 aa).

FAD contacts are provided by residues Gly13 to Ser16, Glu40, Arg47, Lys52, Ile95, and Arg146 to Glu147. Residues Gly171 to Glu177, Glu195, Arg201, and Gly260 each bind NAD(+). Tyr173–Glu177 lines the NADP(+) pocket. Residues Arg201 and Gly260 each coordinate NADP(+). Asp297 is a binding site for FAD. Glu313–His314 provides a ligand contact to NAD(+). Glu313–His314 provides a ligand contact to NADP(+). FAD is bound at residue Val315. Residue Arg319 coordinates L-ascorbate. Tyr348 contributes to the FAD binding site. NAD(+) is bound at residue Tyr348. Tyr348 provides a ligand contact to NADP(+). Arg350 lines the L-ascorbate pocket.

Belongs to the FAD-dependent oxidoreductase family. The cofactor is FAD. As to expression, expressed in leaves, and to a lesser degree in stems, roots and all stages of fruit.

The protein resides in the cytoplasm. It catalyses the reaction 2 monodehydro-L-ascorbate radical + NADH + H(+) = 2 L-ascorbate + NAD(+). Catalyzes the conversion of monodehydroascorbate to ascorbate, oxidizing NADH in the process. This chain is Monodehydroascorbate reductase, found in Solanum lycopersicum (Tomato).